Here is a 256-residue protein sequence, read N- to C-terminus: Acetyl-coenzyme A carboxylase carboxyl transferase subunit alpha (256 aa).

Residues 1 to 236 enclose the CoA carboxyltransferase C-terminal domain; that stretch reads MTDVARILKE…KLHLIDEITQ (236 aa).

Belongs to the AccA family. As to quaternary structure, acetyl-CoA carboxylase is a heterohexamer composed of biotin carboxyl carrier protein (AccB), biotin carboxylase (AccC) and two subunits each of ACCase subunit alpha (AccA) and ACCase subunit beta (AccD).

It is found in the cytoplasm. The enzyme catalyses N(6)-carboxybiotinyl-L-lysyl-[protein] + acetyl-CoA = N(6)-biotinyl-L-lysyl-[protein] + malonyl-CoA. Its pathway is lipid metabolism; malonyl-CoA biosynthesis; malonyl-CoA from acetyl-CoA: step 1/1. Component of the acetyl coenzyme A carboxylase (ACC) complex. First, biotin carboxylase catalyzes the carboxylation of biotin on its carrier protein (BCCP) and then the CO(2) group is transferred by the carboxyltransferase to acetyl-CoA to form malonyl-CoA. This Streptococcus equi subsp. zooepidemicus (strain H70) protein is Acetyl-coenzyme A carboxylase carboxyl transferase subunit alpha.